Consider the following 481-residue polypeptide: Hyaluronidase-4 (481 aa).

Topologically, residues 1–11 (MQLLPEGQLRL) are cytoplasmic. Residues 12–32 (CVFQPVHLTSGLLILFILKSI) form a helical membrane-spanning segment. The Extracellular portion of the chain corresponds to 33–455 (SSLKPARLPV…CREMTEASGP (423 aa)). Cystine bridges form between Cys-59-Cys-351, Cys-223-Cys-237, Cys-376-Cys-387, Cys-381-Cys-435, and Cys-437-Cys-446. Residues Asn-64 and Asn-115 are each glycosylated (N-linked (GlcNAc...) asparagine). Glu-147 functions as the Proton donor in the catalytic mechanism. N-linked (GlcNAc...) asparagine glycosylation is found at Asn-232 and Asn-343. Residues 456 to 476 (SGLSLSSSSVITLCLLVLAGY) traverse the membrane as a helical segment. Residues 477–481 (QSIQL) are Cytoplasmic-facing.

Belongs to the glycosyl hydrolase 56 family.

It is found in the membrane. The enzyme catalyses Random hydrolysis of (1-&gt;4)-linkages between N-acetyl-beta-D-glucosamine and D-glucuronate residues in hyaluronate.. Its function is as follows. Endo-hyaluronidase that degrades hyaluronan to smaller oligosaccharide fragments. Also has chondroitin sulfate hydrolase activity, The best substrate being the galactosaminidic linkage in the sequence of a trisulfated tetrasaccharide. This chain is Hyaluronidase-4 (Hyal4), found in Mus musculus (Mouse).